A 1007-amino-acid chain; its full sequence is uncharacterized protein (1007 aa).

Positions 1-51 are cleaved as a signal peptide; the sequence is MTTPISNSPSSIPTVTVSTTTASSGSLGTSTVSSTTTSTSVAQTATTTSSA. Low complexity predominate over residues 1 to 96; it reads MTTPISNSPS…SATANKTSSA (96 aa). 7 disordered regions span residues 1-186, 200-224, 387-533, 543-562, 578-645, 655-674, and 712-757; these read MTTP…GNPI, TYTT…MSLP, NWGS…GPDI, TVYP…ANQN, ETII…GPDI, and DLED…GPDI. Polar residues predominate over residues 118 to 163; the sequence is DGEVSSNYDDVDTPTNSSDSTVDSDYQDVETQYKTISNNGENTYET. The segment covering 167–176 has biased composition (basic and acidic residues); sequence HGEKNTHVQE. Composition is skewed to polar residues over residues 177-186 and 200-210; these read SHASGTGNPI and TYTTSPRNENI. Over residues 423 to 442 the composition is skewed to low complexity; sequence VINVNVNVGGTNVNIGDTNV. Over residues 443-453 the composition is skewed to polar residues; sequence SKGSGTPTSSQ. A compositionally biased stretch (low complexity) spans 469 to 491; sequence IDTNNQTNGDINTNDNSNNVDGS. Over residues 507–523 the composition is skewed to polar residues; the sequence is DTESTNGNDSGKTTSTE. A compositionally biased stretch (acidic residues) spans 597–618; the sequence is ADADVEDTSDTDSGIGDDDGVS. Low complexity predominate over residues 619–635; the sequence is DTESTNGNNSGKTTSTE. A compositionally biased stretch (acidic residues) spans 712-730; that stretch reads DLEDVSDADSGFGDDDGIS. The span at 732–743 shows a compositional bias: polar residues; that stretch reads TESTNGNDSGKN.

It belongs to the chlamydial CPn_0572/CT_456/TC_0741 family.

This is an uncharacterized protein from Chlamydia muridarum (strain MoPn / Nigg).